A 520-amino-acid chain; its full sequence is Maturase K (520 aa).

It belongs to the intron maturase 2 family. MatK subfamily.

The protein resides in the plastid. Its subcellular location is the chloroplast. In terms of biological role, usually encoded in the trnK tRNA gene intron. Probably assists in splicing its own and other chloroplast group II introns. The chain is Maturase K from Iris cristata (Dwarf crested iris).